We begin with the raw amino-acid sequence, 107 residues long: Hydrogenase expression/formation protein HoxL (107 aa).

This sequence belongs to the HupF/HypC family.

This is Hydrogenase expression/formation protein HoxL (hoxL) from Cupriavidus necator (strain ATCC 17699 / DSM 428 / KCTC 22496 / NCIMB 10442 / H16 / Stanier 337) (Ralstonia eutropha).